A 59-amino-acid polypeptide reads, in one-letter code: MLNIFSLICLNSALYSSSFFFGKLPEAYAFLSPIVDFMPVIPLFFFLLAFVWQAAVSFR.

The propeptide occupies 1-22 (MLNIFSLICLNSALYSSSFFFG). A helical membrane pass occupies residues 30-50 (FLSPIVDFMPVIPLFFFLLAF).

PSII is composed of 1 copy each of membrane proteins PsbA, PsbB, PsbC, PsbD, PsbE, PsbF, PsbH, PsbI, PsbJ, PsbK, PsbL, PsbM, PsbT, PsbX, PsbY, PsbZ, Psb30/Ycf12, at least 3 peripheral proteins of the oxygen-evolving complex and a large number of cofactors. It forms dimeric complexes. This protein, PsbL and plastoquinone-9 are found in PSII dimers but not seen in PSII monomers.

The protein localises to the plastid. The protein resides in the chloroplast thylakoid membrane. Its function is as follows. One of the components of the core complex of photosystem II (PSII). PSII is a light-driven water:plastoquinone oxidoreductase that uses light energy to abstract electrons from H(2)O, generating O(2) and a proton gradient subsequently used for ATP formation. It consists of a core antenna complex that captures photons, and an electron transfer chain that converts photonic excitation into a charge separation. May be involved in PSII dimerization. In terms of biological role, one of the components of the core complex of photosystem II (PSII). PSII is a light-driven water:plastoquinone oxidoreductase that uses light energy to abstract electrons from H(2)O, generating O(2) and a proton gradient subsequently used for ATP formation. It consists of a core antenna complex that captures photons, and an electron transfer chain that converts photonic excitation into a charge separation. The protein is Photosystem II reaction center protein K of Spinacia oleracea (Spinach).